A 213-amino-acid chain; its full sequence is Urease accessory protein UreG (213 aa).

A GTP-binding site is contributed by 10–17 (GPVGSGKT).

Belongs to the SIMIBI class G3E GTPase family. UreG subfamily. In terms of assembly, homodimer. UreD, UreF and UreG form a complex that acts as a GTP-hydrolysis-dependent molecular chaperone, activating the urease apoprotein by helping to assemble the nickel containing metallocenter of UreC. The UreE protein probably delivers the nickel.

It is found in the cytoplasm. Its function is as follows. Facilitates the functional incorporation of the urease nickel metallocenter. This process requires GTP hydrolysis, probably effectuated by UreG. The protein is Urease accessory protein UreG of Deinococcus radiodurans (strain ATCC 13939 / DSM 20539 / JCM 16871 / CCUG 27074 / LMG 4051 / NBRC 15346 / NCIMB 9279 / VKM B-1422 / R1).